The chain runs to 325 residues: D-alanine--D-alanine ligase (325 aa).

The ATP-grasp domain occupies 102-300; that stretch reads KQIFRAAGIP…FTELVERMLQ (199 aa). 130–185 serves as a coordination point for ATP; the sequence is AAELGSPLVIKPSNNGSTVGISIVRDERSFAQGLELARSVSSRIFLERYVPGKEIT. 3 residues coordinate Mg(2+): Asp254, Glu267, and Asn269.

It belongs to the D-alanine--D-alanine ligase family. Requires Mg(2+) as cofactor. Mn(2+) is required as a cofactor.

It localises to the cytoplasm. It carries out the reaction 2 D-alanine + ATP = D-alanyl-D-alanine + ADP + phosphate + H(+). Its pathway is cell wall biogenesis; peptidoglycan biosynthesis. Its function is as follows. Cell wall formation. The protein is D-alanine--D-alanine ligase of Synechococcus sp. (strain JA-2-3B'a(2-13)) (Cyanobacteria bacterium Yellowstone B-Prime).